Here is a 392-residue protein sequence, read N- to C-terminus: B2 bradykinin receptor (392 aa).

Over 1–61 the chain is Extracellular; it reads MPCSWKLLGF…EWWSWLNAIQ (61 aa). N-linked (GlcNAc...) asparagine glycans are attached at residues N29 and N40. The chain crosses the membrane as a helical span at residues 62–85; sequence APFLWVLFLLAALENLFVLSVFFL. Residues 86-94 are Cytoplasmic-facing; sequence HKNSCTVAE. A helical membrane pass occupies residues 95–119; sequence IYLGNLAAADLILACGLPFWAITIA. The Extracellular portion of the chain corresponds to 120–132; it reads NNFDWVFGEVLCR. Cysteines 131 and 212 form a disulfide. Residues 133–154 traverse the membrane as a helical segment; it reads VVNTMIYMNLYSSICFLMLVSI. Residues 155-176 are Cytoplasmic-facing; the sequence is DRYLALVKTMSMGRMRGVRWAK. Residue Y157 is modified to Phosphotyrosine. A helical transmembrane segment spans residues 177–199; sequence LYSLVIWGCTLLLSSPMLVFRTM. Residues 200 to 222 lie on the Extracellular side of the membrane; that stretch reads REYSEEGHNVTACVIVYPSRSWE. N208 carries an N-linked (GlcNAc...) asparagine glycan. A helical transmembrane segment spans residues 223–249; that stretch reads VFTNVLLNLVGFLLPLSVITFCTVRIL. Topologically, residues 250-268 are cytoplasmic; sequence QVLRNNEMKKFKEVQTERK. Residues 269 to 293 form a helical membrane-spanning segment; it reads ATVLVLAVLGLFVLCWVPFQISTFL. Over 294 to 312 the chain is Extracellular; sequence DTLLRLGVLSGCWDEHAVD. A helical transmembrane segment spans residues 313-336; the sequence is VITQISSYVAYSNSGLNPLVYVIV. Residues 337 to 392 lie on the Cytoplasmic side of the membrane; that stretch reads GKRFRKKSREVYRVLCQKGGCMGEPVQMENSMGTLRTSISVERQIHKLQDWAGKKQ. Y348 is subject to Phosphotyrosine. C352 is lipidated: S-palmitoyl cysteine. S367 is subject to Phosphoserine. T370 bears the Phosphothreonine mark. Phosphoserine; by GRK6 is present on residues S374 and S376.

The protein belongs to the G-protein coupled receptor 1 family. Bradykinin receptor subfamily. BDKRB2 sub-subfamily. As to quaternary structure, forms a complex with PECAM1 and GNAQ. Interacts with PECAM1.

It is found in the cell membrane. In terms of biological role, receptor for bradykinin. It is associated with G proteins that activate a phosphatidylinositol-calcium second messenger system. This chain is B2 bradykinin receptor (Bdkrb2), found in Mus musculus (Mouse).